An 85-amino-acid chain; its full sequence is MLKLRLKRCGRKQRAVYRIVAIDVRSRREGRDLRKVGFYDPIKNQTCLNVPAILYFLEKGAQPTRTVSDILRKAEFFKEKERTLS.

Belongs to the bacterial ribosomal protein bS16 family.

The protein localises to the plastid. It localises to the chloroplast. The protein is Small ribosomal subunit protein bS16c of Oryza nivara (Indian wild rice).